A 320-amino-acid chain; its full sequence is Acetyl-coenzyme A carboxylase carboxyl transferase subunit alpha (320 aa).

Residues 41–295 (KIEEKAQQAL…GDAIAAAFAE (255 aa)) enclose the CoA carboxyltransferase C-terminal domain.

This sequence belongs to the AccA family. As to quaternary structure, acetyl-CoA carboxylase is a heterohexamer composed of biotin carboxyl carrier protein (AccB), biotin carboxylase (AccC) and two subunits each of ACCase subunit alpha (AccA) and ACCase subunit beta (AccD).

The protein localises to the cytoplasm. It carries out the reaction N(6)-carboxybiotinyl-L-lysyl-[protein] + acetyl-CoA = N(6)-biotinyl-L-lysyl-[protein] + malonyl-CoA. It participates in lipid metabolism; malonyl-CoA biosynthesis; malonyl-CoA from acetyl-CoA: step 1/1. In terms of biological role, component of the acetyl coenzyme A carboxylase (ACC) complex. First, biotin carboxylase catalyzes the carboxylation of biotin on its carrier protein (BCCP) and then the CO(2) group is transferred by the carboxyltransferase to acetyl-CoA to form malonyl-CoA. This Rhodopseudomonas palustris (strain ATCC BAA-98 / CGA009) protein is Acetyl-coenzyme A carboxylase carboxyl transferase subunit alpha.